The chain runs to 329 residues: Galactosylgalactosylxylosylprotein 3-beta-glucuronosyltransferase 2 (329 aa).

Residues 1-2 lie on the Cytoplasmic side of the membrane; it reads MK. Residues 3-23 form a helical; Signal-anchor for type II membrane protein membrane-spanning segment; it reads SALFSRFFILLPWILIVIIML. The Lumenal segment spans residues 24–329; it reads DVDTRRPAPP…YRLDTVKIEV (306 aa). Positions 45–87 are disordered; that stretch reads VGRGGARLPPRRGGPDSGPGRGWEKRNESRPHARPRPEPPLPT. Residues 66 to 81 show a composition bias toward basic and acidic residues; sequence GWEKRNESRPHARPRP. A glycan (N-linked (GlcNAc...) asparagine) is linked at Asn-71. Residues 93–95, Asp-124, Arg-161, Arg-166, and 191–193 each bind UDP-alpha-D-glucuronate; these read PTY and DDD. Asp-193 is a Mn(2+) binding site. Residues 240-249 form an interaction with galactose moiety of substrate glycoprotein region; the sequence is WRADRPFAID. Glu-279 (proton donor/acceptor) is an active-site residue. A glycan (N-linked (GlcNAc...) asparagine) is linked at Asn-298. 306-308 contributes to the UDP-alpha-D-glucuronate binding site; that stretch reads HTR.

It belongs to the glycosyltransferase 43 family. As to quaternary structure, homodimer. Mn(2+) serves as cofactor.

It localises to the golgi apparatus membrane. It carries out the reaction 3-O-(beta-D-galactosyl-(1-&gt;3)-beta-D-galactosyl-(1-&gt;4)-beta-D-xylosyl)-L-seryl-[protein] + UDP-alpha-D-glucuronate = 3-O-(beta-D-GlcA-(1-&gt;3)-beta-D-Gal-(1-&gt;3)-beta-D-Gal-(1-&gt;4)-beta-D-Xyl)-L-seryl-[protein] + UDP + H(+). It functions in the pathway protein modification; protein glycosylation. Its function is as follows. Involved in the biosynthesis of L2/HNK-1 carbohydrate epitope on both glycolipids and glycoproteins. The protein is Galactosylgalactosylxylosylprotein 3-beta-glucuronosyltransferase 2 (B3GAT2) of Canis lupus familiaris (Dog).